Consider the following 276-residue polypeptide: TIMELESS-interacting protein (276 aa).

Positions 1 to 54 (MLEQEENGLFEIPDYEHVEDETFPPFPPPGSPERDPAEAEPDEGSGAPVPVPPK) are disordered. The tract at residues 64–140 (LDATRLTSER…KEVQTCLKRI (77 aa)) is interaction with TIMELESS. Positions 217–243 (SNSQSLENDVTVEESSTGENQEESNGL) are enriched in polar residues. Positions 217–276 (SNSQSLENDVTVEESSTGENQEESNGLISADGPHDVPSASTQEEGQLEAEETQLDHPNLD) are disordered. Residue Ser-219 is modified to Phosphoserine. Thr-233 bears the Phosphothreonine mark.

The protein belongs to the CSM3 family. In terms of assembly, interacts with TIMELESS, which impairs TIMELESS self-association (via N-terminus). Associates with the MCM2-7 complex. Interacts with RPA2, PRDX2.

It is found in the cytoplasm. The protein localises to the nucleus. Functionally, plays an important role in the control of DNA replication and the maintenance of replication fork stability. Important for cell survival after DNA damage or replication stress. May be specifically required for the ATR-CHEK1 pathway in the replication checkpoint induced by hydroxyurea or ultraviolet light. Forms a complex with TIMELESS and this complex regulates DNA replication processes under both normal and stress conditions, stabilizes replication forks and influences both CHEK1 phosphorylation and the intra-S phase checkpoint in response to genotoxic stress. In Rattus norvegicus (Rat), this protein is TIMELESS-interacting protein (Tipin).